Reading from the N-terminus, the 427-residue chain is Homeobox protein knotted-1-like 3 (427 aa).

Disordered regions lie at residues 19–49 and 272–291; these read QTHH…QPAP and TGVS…EDDQ. Residues 272 to 284 are compositionally biased toward polar residues; it reads TGVSPGEGTSATM. In terms of domain architecture, ELK spans 330-350; the sequence is ELKHELKQGYKEKIVDIREEI. A DNA-binding region (homeobox; TALE-type) is located at residues 351 to 414; sequence LRKRRAGKLP…NQRKRNWHSN (64 aa).

Belongs to the TALE/KNOX homeobox family. Maximally expressed in sepals, petals and fully expanded leaves. Also expressed in other flower organs and in developing leaves. Low level expression in stem internodes.

The protein localises to the nucleus. The polypeptide is Homeobox protein knotted-1-like 3 (Malus domestica (Apple)).